Here is a 327-residue protein sequence, read N- to C-terminus: Beta-ketoacyl-[acyl-carrier-protein] synthase III 2 (327 aa).

Active-site residues include cysteine 114 and histidine 251. An ACP-binding region spans residues 252–256 (SANLR). Residue asparagine 281 is part of the active site.

This sequence belongs to the thiolase-like superfamily. FabH family. In terms of assembly, homodimer.

The protein resides in the cytoplasm. The catalysed reaction is malonyl-[ACP] + acetyl-CoA + H(+) = 3-oxobutanoyl-[ACP] + CO2 + CoA. The protein operates within lipid metabolism; fatty acid biosynthesis. Its function is as follows. Catalyzes the condensation reaction of fatty acid synthesis by the addition to an acyl acceptor of two carbons from malonyl-ACP. Catalyzes the first condensation reaction which initiates fatty acid synthesis and may therefore play a role in governing the total rate of fatty acid production. Possesses both acetoacetyl-ACP synthase and acetyl transacylase activities. Its substrate specificity determines the biosynthesis of branched-chain and/or straight-chain of fatty acids. This is Beta-ketoacyl-[acyl-carrier-protein] synthase III 2 from Bacillus cereus (strain ATCC 14579 / DSM 31 / CCUG 7414 / JCM 2152 / NBRC 15305 / NCIMB 9373 / NCTC 2599 / NRRL B-3711).